A 318-amino-acid polypeptide reads, in one-letter code: Ferrochelatase (318 aa).

The Fe cation site is built by His-186 and Glu-264.

The protein belongs to the ferrochelatase family.

It is found in the cytoplasm. It carries out the reaction heme b + 2 H(+) = protoporphyrin IX + Fe(2+). Its pathway is porphyrin-containing compound metabolism; protoheme biosynthesis; protoheme from protoporphyrin-IX: step 1/1. Its function is as follows. Catalyzes the ferrous insertion into protoporphyrin IX. The chain is Ferrochelatase from Chlamydia caviae (strain ATCC VR-813 / DSM 19441 / 03DC25 / GPIC) (Chlamydophila caviae).